The sequence spans 1427 residues: ATP-binding cassette transporter abc1 (1427 aa).

Residues 26-46 traverse the membrane as a helical segment; that stretch reads LLLFYLSLFSLTNLFLIQKLF. The N-linked (GlcNAc...) asparagine glycan is linked to asparagine 49. 9 helical membrane-spanning segments follow: residues 63–83, 87–107, 115–135, 155–175, 197–217, 262–282, 298–318, 345–367, and 397–417; these read CLLEYIQIILSIVSAALSFYL, AVWWAIRTITHLEIVGLNILS, LFSWISVANAFGLLLLRLISI, LLLPLAYNITLFLLVIIPLFF, CSIFSLIFTYGWLNGIIWKSW, ILLMVFLSVLVSSTLFVTPLA, GNSPFLWVFVLLIGPYLASVV, VLTSKTLFVAVDGSKINLDYVYN, and MYFLYQLLGWSAYVGLLLAIL. Residues 262–549 form the ABC transmembrane type-1 1 domain; the sequence is ILLMVFLSVL…LASVSRQFIQ (288 aa). Asparagine 437 carries an N-linked (GlcNAc...) asparagine glycan. 2 consecutive transmembrane segments (helical) span residues 489-509 and 513-533; these read IIFKSGMKIAPFISMFITFAI and IMGHQLTPATAFTSISMFGLL. Residues asparagine 567, asparagine 581, and asparagine 601 are each glycosylated (N-linked (GlcNAc...) asparagine). The region spanning 579-807 is the ABC transporter 1 domain; sequence FENTSLSWSP…PSTFFSSNTK (229 aa). A helical membrane pass occupies residues 609–629; it reads FTLVVGSTGSGKSTLAMALLG. ATP is bound at residue 614 to 621; the sequence is GSTGSGKS. N-linked (GlcNAc...) asparagine glycosylation is found at asparagine 658 and asparagine 703. Residues 760-780 traverse the membrane as a helical segment; it reads IILFTHNVSLCLPIAENVIVL. 2 N-linked (GlcNAc...) asparagine glycosylation sites follow: asparagine 782 and asparagine 842. Residues 862-1142 enclose the ABC transmembrane type-1 2 domain; sequence ILGSILLVMM…FVRANNEILT (281 aa). Transmembrane regions (helical) follow at residues 866-886, 896-916, and 973-993; these read ILLVMMSQVSLASIHFWIALW, LPSSFSFLWGYAILLFIYFLM, and LLWASLEGMLLCVMAILITML. N-linked (GlcNAc...) asparagine glycosylation occurs at asparagine 994. 3 helical membrane-spanning segments follow: residues 995 to 1015, 1086 to 1106, and 1114 to 1134; these read VTLVMPIFMVPAAFVSLLVYL, LAIRTDGISGLVGFSTGLIAL, and GLVGFSLNSAIGFNISVLVFV. Asparagine 1161 and asparagine 1184 each carry an N-linked (GlcNAc...) asparagine glycan. The ABC transporter 2 domain occupies 1180-1422; that stretch reads VSIKNLTVSY…RRAFWKMCKE (243 aa). Residue 1214-1221 participates in ATP binding; that stretch reads GRTGSGKS. Residues 1223 to 1243 traverse the membrane as a helical segment; sequence MGLTLLRFTMIMSGAVEVDGI. Asparagine 1324 carries N-linked (GlcNAc...) asparagine glycosylation.

This sequence belongs to the ABC transporter superfamily. ABCC family. Conjugate transporter (TC 3.A.1.208) subfamily.

The protein localises to the membrane. In Schizosaccharomyces pombe (strain 972 / ATCC 24843) (Fission yeast), this protein is ATP-binding cassette transporter abc1 (abc1).